The sequence spans 112 residues: Large ribosomal subunit protein bL20c (112 aa).

The protein belongs to the bacterial ribosomal protein bL20 family.

Its subcellular location is the plastid. The protein localises to the chloroplast. Its function is as follows. Binds directly to 23S ribosomal RNA and is necessary for the in vitro assembly process of the 50S ribosomal subunit. It is not involved in the protein synthesizing functions of that subunit. In Anthoceros angustus (Hornwort), this protein is Large ribosomal subunit protein bL20c (rpl20).